A 245-amino-acid chain; its full sequence is Probable transcriptional regulatory protein MARTH_orf271 (245 aa).

This sequence belongs to the TACO1 family.

The protein localises to the cytoplasm. This is Probable transcriptional regulatory protein MARTH_orf271 from Metamycoplasma arthritidis (strain 158L3-1) (Mycoplasma arthritidis).